We begin with the raw amino-acid sequence, 1553 residues long: Sodium channel protein PaFPC1 (1553 aa).

Residues 1-68 (MADNSPLIRE…SAHPDQALEQ (68 aa)) are disordered. Residues 1–140 (MADNSPLIRE…RVAISTMVQP (140 aa)) lie on the Cytoplasmic side of the membrane. Basic and acidic residues predominate over residues 34 to 60 (ENGKTEENKDNSRDKGRGANKDRDGSA). A helical transmembrane segment spans residues 141–159 (IFSYFIMITILIHCIFMIM). Residues 160–165 (PATQTT) are Extracellular-facing. A helical membrane pass occupies residues 166–186 (YILELVFLSIYTIEVVVKVLA). At 187–200 (RGFILHPFAYLRDP) the chain is on the cytoplasmic side. A helical transmembrane segment spans residues 201-218 (WNWLDFLVTLIGYITLVV). At 219–224 (DLGHLY) the chain is on the extracellular side. A helical membrane pass occupies residues 225-241 (ALRAFRVLRSWRTVTIV). Residues 242-260 (PGWRTIVDALSLSITSLKD) are Cytoplasmic-facing. The chain crosses the membrane as a helical span at residues 261 to 280 (LVLLLLFSLFVFAVLGLQIY). At 281-360 (MGVLTQKCVK…PNYGYTSFDT (80 aa)) the chain is on the extracellular side. Cystine bridges form between Cys288–Cys337 and Cys328–Cys343. Residues Asn300, Asn308, Asn312, and Asn330 are each glycosylated (N-linked (GlcNAc...) asparagine). The segment at residues 361-385 (FGWAFLSVFRLVTLDYWEDLYQLAL) is an intramembrane region (pore-forming). Glu378 is a binding site for saxitoxin. Residues 386-392 (RSAGPWH) lie on the Extracellular side of the membrane. A helical membrane pass occupies residues 393-413 (ILFFIIVVFYGTFCFLNFILA). Over 414–519 (VVVMSYTHMV…GAIGAVVLSP (106 aa)) the chain is Cytoplasmic. The helical transmembrane segment at 520–538 (FFELFIAVIIVLNITFMAL) threads the bilayer. The Extracellular segment spans residues 539–549 (DHHDMNIEFER). The chain crosses the membrane as a helical span at residues 550–569 (ILRTGNYIFTSIYIVEAVLK). Topologically, residues 570-583 (IIALSPKFYFKDSW) are cytoplasmic. Residues 584-603 (NVFDFIIVVFAILELGLEGV) traverse the membrane as a helical segment. Topologically, residues 604–605 (QG) are extracellular. A helical membrane pass occupies residues 606 to 623 (LSVFRSFRLLRVFRLAKF). The Cytoplasmic segment spans residues 624 to 639 (WPTLNNFMSVMTKSYG). Residues 640–658 (AFVNVMYVMFLLLFIFAII) traverse the membrane as a helical segment. The Extracellular segment spans residues 659–686 (GMQLFGMNYIDNMERFPDGDLPRWNFTD). A glycan (N-linked (GlcNAc...) asparagine) is linked at Asn683. An intramembrane region (pore-forming) is located at residues 687–707 (FLHSFMIVFRALCGEWIESMW). Glu701 and Glu704 together coordinate tetrodotoxin. Glu704 contributes to the saxitoxin binding site. Over 708-719 (DCMLVGDWSCIP) the chain is Extracellular. A disulfide bond links Cys709 and Cys717. Residues 720-740 (FFVAVFFVGNLVILNLLIALL) traverse the membrane as a helical segment. At 741-857 (LNNYGSFCTS…VCFLLAKNKY (117 aa)) the chain is on the cytoplasmic side. The helical transmembrane segment at 858–875 (FQKFVTAVLVITSVLLAL) threads the bilayer. At 876–888 (EDIYLPQRPVLVN) the chain is on the extracellular side. Residues 889-907 (ITLYVDYVLTAFFVIEMII) form a helical membrane-spanning segment. At 908-921 (MLFAVGFKKYFTSK) the chain is on the cytoplasmic side. Residues 922–940 (WYWLDFIVVVAYLLNFVLM) traverse the membrane as a helical segment. Residues 941–945 (CAGIE) are Extracellular-facing. The chain crosses the membrane as a helical span at residues 946-964 (ALQTLRLLRVFRLFRPLSK). Topologically, residues 965–981 (VNGMQVVTSTLVEAVPH) are cytoplasmic. The chain crosses the membrane as a helical span at residues 982-1001 (IFNVILVGIFFWLVFAIMGV). Residues 1002 to 1047 (QLFAGKFYKCVDENSTVLSHEITMDRNDCLHENYTWENSPMNFDHV) are Extracellular-facing. Cys1011 and Cys1030 are oxidised to a cystine. Asn1015 is a glycosylation site (N-linked (GlcNAc...) asparagine). An N-linked (GlcNAc...) asparagine; atypical glycan is attached at Asn1028. A glycan (N-linked (GlcNAc...) asparagine) is linked at Asn1034. Residues 1048 to 1069 (GNAYLSLLQVATFKGWLQIMND) constitute an intramembrane region (pore-forming). Gly1062 lines the tetrodotoxin pocket. Trp1063 lines the saxitoxin pocket. Over 1070–1086 (AIDSREVHKQPIRETNI) the chain is Extracellular. Residues 1087–1108 (YMYLYFIFFIVFGSFFILKLFV) traverse the membrane as a helical segment. The Cytoplasmic segment spans residues 1109 to 1171 (CILIDIFRQQ…LMYDISVNRK (63 aa)). A linker region that may regulate channel inactivation region spans residues 1133–1146 (QLIYRRAVMRTMSA). Residues 1172 to 1189 (FEYTMMILIILNVAVMAI) traverse the membrane as a helical segment. The Extracellular segment spans residues 1190–1200 (DHYGQSMEFSE). Residues 1201-1219 (VLDYLNLIFIIIFFVECVI) form a helical membrane-spanning segment. Over 1220 to 1231 (KVSGLRHHYFKD) the chain is Cytoplasmic. The helical transmembrane segment at 1232 to 1249 (PWNIIDFLYVVLAIAGLM) threads the bilayer. At 1250-1262 (LSDVIEKYFISPT) the chain is on the extracellular side. Residues 1263–1279 (LLRILRILRVGRLLRYF) form a helical membrane-spanning segment. Residues 1280-1298 (QSARGMRLLLLALRKALRT) are Cytoplasmic-facing. The chain crosses the membrane as a helical span at residues 1299-1316 (LFNVSFLLFVIMFVYAVF). The Extracellular portion of the chain corresponds to 1317-1338 (GMEFFMHIRDAGAIDDVYNFKT). The pore-forming intramembrane region spans 1339-1361 (FGQSIILLFQLATSAGWDGVYFA). Tetrodotoxin contacts are provided by Gly1354 and Asp1356. Residue Asp1356 participates in saxitoxin binding. At 1362-1387 (IANEEDCRAPDHELGYPGNCGSRALG) the chain is on the extracellular side. A disulfide bridge links Cys1368 with Cys1381. Residues 1388–1410 (IAYLVSYLIITCLVVINMYAAVI) form a helical membrane-spanning segment. At 1411–1553 (LDYVLEVYED…NAWRKHKQQN (143 aa)) the chain is on the cytoplasmic side.

Belongs to the sodium channel (TC 1.A.1.10) family. As to expression, detected in adult nerve cord, muscle, gut and mushroom-shaped accessory glands.

Its subcellular location is the cell membrane. Its activity is regulated as follows. Inhibited by the pore blockers saxitoxin and tetrodotoxin. Functionally, mediates the voltage-dependent sodium ion permeability of excitable membranes. The chain is Sodium channel protein PaFPC1 from Periplaneta americana (American cockroach).